Consider the following 491-residue polypeptide: Cysteine--tRNA ligase (491 aa).

Cysteine 31 contacts Zn(2+). The short motif at 33–43 is the 'HIGH' region element; that stretch reads PTVYGDAHLGH. Zn(2+) is bound by residues cysteine 226, histidine 251, and glutamate 255. A 'KMSKS' region motif is present at residues 283–287; that stretch reads KMGKS. Position 286 (lysine 286) interacts with ATP.

It belongs to the class-I aminoacyl-tRNA synthetase family. Monomer. It depends on Zn(2+) as a cofactor.

The protein localises to the cytoplasm. It catalyses the reaction tRNA(Cys) + L-cysteine + ATP = L-cysteinyl-tRNA(Cys) + AMP + diphosphate. This Bacteroides fragilis (strain ATCC 25285 / DSM 2151 / CCUG 4856 / JCM 11019 / LMG 10263 / NCTC 9343 / Onslow / VPI 2553 / EN-2) protein is Cysteine--tRNA ligase.